Consider the following 61-residue polypeptide: Large ribosomal subunit protein bL28 (61 aa).

Belongs to the bacterial ribosomal protein bL28 family.

The protein is Large ribosomal subunit protein bL28 of Lacticaseibacillus paracasei (strain ATCC 334 / BCRC 17002 / CCUG 31169 / CIP 107868 / KCTC 3260 / NRRL B-441) (Lactobacillus paracasei).